The following is a 158-amino-acid chain: Eukaryotic translation initiation factor 5A-1 (158 aa).

The span at 1-10 shows a compositional bias: basic and acidic residues; the sequence is MSDEEHHFES. Residues 1–21 are disordered; the sequence is MSDEEHHFESSDAGASKTYPQ. Ser-2 bears the Phosphoserine mark. Position 51 is a hypusine (Lys-51).

It belongs to the eIF-5A family. Lys-51 undergoes hypusination, a unique post-translational modification that consists in the addition of a butylamino group from spermidine to lysine side chain, leading to the formation of the unusual amino acid hypusine. eIF-5As are the only known proteins to undergo this modification, which is essential for their function. Expressed in leaf vasculature and inflorescence stems. Present in xylem tissue but not in phloem, and in developing vessel members, but not in mature vessels members. Detected in anthers.

Its function is as follows. Translation factor that promotes translation elongation and termination, particularly upon ribosome stalling at specific amino acid sequence contexts. Binds between the exit (E) and peptidyl (P) site of the ribosome and promotes rescue of stalled ribosome: specifically required for efficient translation of polyproline-containing peptides as well as other motifs that stall the ribosome. Acts as a ribosome quality control (RQC) cofactor by joining the RQC complex to facilitate peptidyl transfer during CAT tailing step. Involved in xylogenesis. This Arabidopsis thaliana (Mouse-ear cress) protein is Eukaryotic translation initiation factor 5A-1 (ELF5A-1).